A 64-amino-acid polypeptide reads, in one-letter code: Cecropin-A (64 aa).

The first 22 residues, 1–22 (MNFSRIFFFVFACLTALAMVNA), serve as a signal peptide directing secretion. A propeptide spans 23–26 (APEP) (removed by a dipeptidylpeptidase). K63 carries the post-translational modification Lysine amide.

This sequence belongs to the cecropin family. In terms of processing, a protein with the same sequence as cecropin A, but lacking the carboxyl blocking group, has been isolated and called cecropin C.

Its subcellular location is the secreted. Functionally, cecropins have lytic and antibacterial activity against several Gram-positive and Gram-negative bacteria. This chain is Cecropin-A, found in Hyalophora cecropia (Cecropia moth).